Consider the following 122-residue polypeptide: Small ribosomal subunit protein uS13 (122 aa).

The tract at residues 93 to 122 (RLSLPVRGQRTKTNSRTRKGKRKTVAGKKK) is disordered. Residues 101-122 (QRTKTNSRTRKGKRKTVAGKKK) show a composition bias toward basic residues.

This sequence belongs to the universal ribosomal protein uS13 family. Part of the 30S ribosomal subunit. Forms a loose heterodimer with protein S19. Forms two bridges to the 50S subunit in the 70S ribosome.

In terms of biological role, located at the top of the head of the 30S subunit, it contacts several helices of the 16S rRNA. In the 70S ribosome it contacts the 23S rRNA (bridge B1a) and protein L5 of the 50S subunit (bridge B1b), connecting the 2 subunits; these bridges are implicated in subunit movement. Contacts the tRNAs in the A and P-sites. This Chlamydia caviae (strain ATCC VR-813 / DSM 19441 / 03DC25 / GPIC) (Chlamydophila caviae) protein is Small ribosomal subunit protein uS13.